Reading from the N-terminus, the 158-residue chain is Small ribosomal subunit protein uS17 (158 aa).

Ala2 carries the N-acetylalanine modification. Arg22 is subject to Citrulline. Lys38, Lys45, and Lys58 each carry N6-acetyllysine. Residue Cys60 is the site of S-palmitoyl cysteine attachment. Position 67 is a phosphoserine (Ser67). Arg69 bears the Omega-N-methylarginine mark. Ser110 carries the post-translational modification Phosphoserine.

This sequence belongs to the universal ribosomal protein uS17 family. As to quaternary structure, component of the small ribosomal subunit. Part of the small subunit (SSU) processome, composed of more than 70 proteins and the RNA chaperone small nucleolar RNA (snoRNA) U3. In terms of processing, citrullinated by PADI4.

The protein localises to the cytoplasm. It is found in the nucleus. Its subcellular location is the nucleolus. In terms of biological role, component of the small ribosomal subunit. The ribosome is a large ribonucleoprotein complex responsible for the synthesis of proteins in the cell. Part of the small subunit (SSU) processome, first precursor of the small eukaryotic ribosomal subunit. During the assembly of the SSU processome in the nucleolus, many ribosome biogenesis factors, an RNA chaperone and ribosomal proteins associate with the nascent pre-rRNA and work in concert to generate RNA folding, modifications, rearrangements and cleavage as well as targeted degradation of pre-ribosomal RNA by the RNA exosome. The polypeptide is Small ribosomal subunit protein uS17 (RPS11) (Canis lupus familiaris (Dog)).